The following is a 184-amino-acid chain: Ribosome maturation factor RimM (184 aa).

Residues 105-184 form the PRC barrel domain; the sequence is EDEFYWRELF…RIEVDWDPAF (80 aa).

Belongs to the RimM family. As to quaternary structure, binds ribosomal protein uS19.

It is found in the cytoplasm. Its function is as follows. An accessory protein needed during the final step in the assembly of 30S ribosomal subunit, possibly for assembly of the head region. Essential for efficient processing of 16S rRNA. May be needed both before and after RbfA during the maturation of 16S rRNA. It has affinity for free ribosomal 30S subunits but not for 70S ribosomes. The sequence is that of Ribosome maturation factor RimM from Vibrio cholerae serotype O1 (strain ATCC 39541 / Classical Ogawa 395 / O395).